The primary structure comprises 702 residues: Ribosomal RNA large subunit methyltransferase K/L (702 aa).

The region spanning 43–154 is the THUMP domain; it reads LVYQSLMWSR…KETASIALDL (112 aa).

Belongs to the methyltransferase superfamily. RlmKL family.

Its subcellular location is the cytoplasm. The enzyme catalyses guanosine(2445) in 23S rRNA + S-adenosyl-L-methionine = N(2)-methylguanosine(2445) in 23S rRNA + S-adenosyl-L-homocysteine + H(+). It carries out the reaction guanosine(2069) in 23S rRNA + S-adenosyl-L-methionine = N(2)-methylguanosine(2069) in 23S rRNA + S-adenosyl-L-homocysteine + H(+). In terms of biological role, specifically methylates the guanine in position 2445 (m2G2445) and the guanine in position 2069 (m7G2069) of 23S rRNA. In Escherichia coli O157:H7, this protein is Ribosomal RNA large subunit methyltransferase K/L.